We begin with the raw amino-acid sequence, 543 residues long: Malate synthase (543 aa).

The active-site Proton acceptor is arginine 162. The active-site Proton donor is aspartate 449.

It belongs to the malate synthase family.

It carries out the reaction glyoxylate + acetyl-CoA + H2O = (S)-malate + CoA + H(+). The protein operates within carbohydrate metabolism; glyoxylate cycle; (S)-malate from isocitrate: step 2/2. In Dictyostelium discoideum (Social amoeba), this protein is Malate synthase (masA).